The primary structure comprises 720 residues: Translation initiation factor IF-2 (720 aa).

The disordered stretch occupies residues 48 to 138; that stretch reads KKFKASQAKD…NEVEETKEMP (91 aa). 2 stretches are compositionally biased toward low complexity: residues 60–75 and 99–113; these read KQNT…NKQN and KGKQ…NKNQ. The span at 114–123 shows a compositional bias: basic residues; it reads KNNKNKKNNK. The tr-type G domain occupies 222–391; the sequence is ERPAVVTIMG…GLVAEVQELK (170 aa). Residues 231-238 are G1; that stretch reads GHVDHGKT. Position 231 to 238 (231 to 238) interacts with GTP; it reads GHVDHGKT. The G2 stretch occupies residues 256-260; sequence GITQH. A G3 region spans residues 277 to 280; sequence DTPG. GTP contacts are provided by residues 277–281 and 331–334; these read DTPGH and NKID. The G4 stretch occupies residues 331 to 334; sequence NKID. Residues 367-369 form a G5 region; that stretch reads SAL.

This sequence belongs to the TRAFAC class translation factor GTPase superfamily. Classic translation factor GTPase family. IF-2 subfamily.

The protein resides in the cytoplasm. Functionally, one of the essential components for the initiation of protein synthesis. Protects formylmethionyl-tRNA from spontaneous hydrolysis and promotes its binding to the 30S ribosomal subunits. Also involved in the hydrolysis of GTP during the formation of the 70S ribosomal complex. The sequence is that of Translation initiation factor IF-2 from Staphylococcus epidermidis (strain ATCC 35984 / DSM 28319 / BCRC 17069 / CCUG 31568 / BM 3577 / RP62A).